The sequence spans 770 residues: Amyloid-beta precursor protein (770 aa).

The first 17 residues, 1 to 17 (MLPGLALLLLAAWTARA), serve as a signal peptide directing secretion. At 18-701 (LEVPTDGNAG…AEDVGSNKGA (684 aa)) the chain is on the extracellular side. Residues 28–123 (LLAEPQIAMF…PYRCLVGEFV (96 aa)) form a GFLD subdomain region. Residues 28–189 (LLAEPQIAMF…RGVEFVCCPL (162 aa)) form the E1 domain. 6 disulfides stabilise this stretch: Cys-38–Cys-62, Cys-73–Cys-117, Cys-98–Cys-105, Cys-133–Cys-187, Cys-144–Cys-174, and Cys-158–Cys-186. 96–110 (NWCKRGRKQCKTHPH) lines the heparin pocket. The segment at 131-189 (DKCKFLHQERMDVCETHLHWHTVAKETCSEKSTNLHDYGMLLPCGIDKFRGVEFVCCPL) is cuBD subdomain. Cu(2+)-binding residues include His-147, His-151, and Tyr-168. A zinc-binding region spans residues 181-188 (GVEFVCCP). Zn(2+) contacts are provided by Glu-183, Cys-186, and Cys-187. Residues 194-207 (DNVDSADAEEDDSD) show a composition bias toward acidic residues. A disordered region spans residues 194-284 (DNVDSADAEE…TTTTTTESVE (91 aa)). Ser-198 carries the phosphoserine; by CK2 modification. Ser-206 carries the phosphoserine; by CK1 modification. Residues Tyr-217 and Tyr-262 each carry the sulfotyrosine modification. Acidic residues predominate over residues 228–264 (VAEEEEVAEVEEEEADDDEDDEDGDEVEEEAEEPYEE). Residues 268-281 (RTTSIATTTTTTTE) are compositionally biased toward low complexity. 3 cysteine pairs are disulfide-bonded: Cys-291/Cys-341, Cys-300/Cys-324, and Cys-316/Cys-337. The BPTI/Kunitz inhibitor domain occupies 291 to 341 (CSEQAETGPCRAMISRWYFDVTEGKCAPFFYGGCGGNRNNFDTEEYCMAVC). Tyr-336 is subject to Sulfotyrosine. The short motif at 344-365 (VMSQSLRKTTREPLTRDPVKLP) is the OX-2 element. An E2 domain is found at 374–565 (AVDKYLETPG…EEIQDEVDEL (192 aa)). The tract at residues 391-423 (FQKAKERLEAKHRERMSQVMREWEEAERQAKNL) is heparin-binding. Ser-441 bears the Phosphoserine mark. A heparin-binding region spans residues 491–522 (FNMLKKYVRAEQKDRQHTLKHFEHVRMVDPKK). Tyr-497 carries the post-translational modification Phosphotyrosine. Residues 523–540 (AAQIRSQVMTHLRVIYER) form a collagen-binding region. Asn-542 and Asn-571 each carry an N-linked (GlcNAc...) asparagine glycan. Residues His-677, Tyr-681, His-684, and His-685 each coordinate Cu(2+). Zn(2+) contacts are provided by His-677, Tyr-681, His-684, and His-685. The interaction with PSEN1 stretch occupies residues 695–722 (VGSNKGAIIGLMVGGVVIATVIVITLVM). A helical membrane pass occupies residues 702–722 (IIGLMVGGVVIATVIVITLVM). The Cytoplasmic segment spans residues 723–770 (LKKKQYTSIHHGVVEVDAAVTPEERHLSKMQQNGYENPTYKFFEQMQN). The short motif at 724–734 (KKKQYTSIHHG) is the Basolateral sorting signal element. Thr-729 is subject to Phosphothreonine. Position 730 is a phosphoserine; by APP-kinase I (Ser-730). The interval 732–751 (HHGVVEVDAAVTPEERHLSK) is interaction with G(o)-alpha. A Phosphothreonine; by CDK5 and MAPK10 modification is found at Thr-743. The segment at 756 to 770 (GYENPTYKFFEQMQN) is required for the interaction with KIF5B and for anterograde transport in axons. Tyr-757 is subject to Phosphotyrosine; by ABL1. The short motif at 757–762 (YENPTY) is the YENPXY motif; contains endocytosis signal element. Residue Lys-763 forms a Glycyl lysine isopeptide (Lys-Gly) (interchain with G-Cter in ubiquitin) linkage.

The protein belongs to the APP family. In terms of assembly, binds, via its C-terminus, to the PID domain of several cytoplasmic proteins, including APBB family members, the APBA family, MAPK8IP1, SHC1 and NUMB and DAB1. Binding to DAB1 inhibits its serine phosphorylation. Interacts (via NPXY motif) with DAB2 (via PID domain); the interaction is impaired by tyrosine phosphorylation of the NPXY motif. Also interacts with GPCR-like protein BPP, APPBP1, IB1, KNS2 (via its TPR domains), APPBP2 (via BaSS) and DDB1. In vitro, it binds MAPT via the MT-binding domains. Associates with microtubules in the presence of ATP and in a kinesin-dependent manner. Interacts, through a C-terminal domain, with GNAO1. Amyloid-beta protein 42 binds CHRNA7 in hippocampal neurons. Amyloid-beta associates with HADH2. Interacts with CPEB1, ANKS1B and AGER. Interacts with ITM2B. Interacts with ITM2C. Interacts with IDE. Can form homodimers; dimerization is enhanced in the presence of Cu(2+) ions. Can form homodimers; this is promoted by heparin binding. Amyloid-beta protein 40 interacts with S100A9. CTF-alpha product of APP interacts with GSAP. Isoform APP695 interacts with SORL1 (via N-terminal ectodomain); this interaction retains APP in the trans-Golgi network and reduces processing into soluble APP-alpha and amyloid-beta peptides. Isoform APP770 interacts with SORL1. The C99 fragment also interacts with SORL1. Interacts with PLD3. Interacts with VDAC1. Interacts with NSG1; could regulate APP processing. Amyloid-beta protein 42 interacts with FPR2. Interacts (via transmembrane region) with PSEN1; the interaction is direct. Interacts with LRRK2. Interacts (via cytoplasmic domain) with KIF5B. Interacts (via C-terminus) with APBB2/FE65L1 (via C-terminus). Interacts (via intracellular domain) with APBB3. Post-translationally, proteolytically processed under normal cellular conditions. Cleavage either by alpha-secretase, beta-secretase or theta-secretase leads to generation and extracellular release of soluble APP peptides, S-APP-alpha and S-APP-beta, and the retention of corresponding membrane-anchored C-terminal fragments, C80, C83 and C99. Subsequent processing of C80 and C83 by gamma-secretase yields P3 peptides. This is the major secretory pathway and is non-amyloidogenic. Alternatively, presenilin/nicastrin-mediated gamma-secretase processing of C99 releases the amyloid-beta proteins, amyloid-beta protein 40 and amyloid-beta protein 42, major components of amyloid plaques, and the cytotoxic C-terminal fragments, gamma-CTF(50), gamma-CTF(57) and gamma-CTF(59). PSEN1 cleavage is more efficient with C83 than with C99 as substrate (in vitro). Amyloid-beta protein 40 and Amyloid-beta protein 42 are cleaved by ACE. Many other minor amyloid-beta peptides, amyloid-beta 1-X peptides, are found in cerebral spinal fluid (CSF) including the amyloid-beta X-15 peptides, produced from the cleavage by alpha-secretase. Proteolytically cleaved by caspases during neuronal apoptosis. Cleavage at Asp-739 by either caspase-3, -8 or -9 results in the production of the neurotoxic C31 peptide and the increased production of amyloid-beta peptides. In terms of processing, N- and O-glycosylated. Post-translationally, phosphorylation in the C-terminal on tyrosine, threonine and serine residues is neuron-specific. Phosphorylation can affect APP processing, neuronal differentiation and interaction with other proteins. Phosphorylated on Thr-743 in neuronal cells by Cdc5 kinase and Mapk10, in dividing cells by Cdc2 kinase in a cell-cycle dependent manner with maximal levels at the G2/M phase and, in vitro, by GSK-3-beta. The Thr-743 phosphorylated form causes a conformational change which reduces binding of Fe65 family members. In dopaminergic (DA) neurons, phosphorylation on Thr-743 by LRKK2 promotes the production and the nuclear translocation of the APP intracellular domain (AICD) which induces DA neuron apoptosis. Phosphorylation on Tyr-757 is required for SHC binding. Phosphorylated in the extracellular domain by casein kinases on both soluble and membrane-bound APP. This phosphorylation is inhibited by heparin. Trophic-factor deprivation triggers the cleavage of surface APP by beta-secretase to release sAPP-beta which is further cleaved to release an N-terminal fragment of APP (N-APP). In terms of processing, amyloid-beta peptides are degraded by IDE. Post-translationally, sulfated on tyrosine residues.

It is found in the cell membrane. The protein localises to the membrane. The protein resides in the perikaryon. It localises to the cell projection. Its subcellular location is the growth cone. It is found in the clathrin-coated pit. The protein localises to the early endosome. The protein resides in the cytoplasmic vesicle. It localises to the endoplasmic reticulum. Its subcellular location is the golgi apparatus. It is found in the secreted. The protein localises to the cell surface. The protein resides in the nucleus. It localises to the cytoplasm. Functions as a cell surface receptor and performs physiological functions on the surface of neurons relevant to neurite growth, neuronal adhesion and axonogenesis. Interaction between APP molecules on neighboring cells promotes synaptogenesis. Involved in cell mobility and transcription regulation through protein-protein interactions. Can promote transcription activation through binding to APBB1-KAT5 and inhibit Notch signaling through interaction with Numb. Couples to apoptosis-inducing pathways such as those mediated by G(o) and JIP. Inhibits G(o)-alpha ATPase activity. Acts as a kinesin I membrane receptor, mediating the axonal transport of beta-secretase and presenilin 1. By acting as a kinesin I membrane receptor, plays a role in axonal anterograde transport of cargo towards synapses in axons. May be involved in copper homeostasis/oxidative stress through copper ion reduction. In vitro, copper-metallated APP induces neuronal death directly or is potentiated through Cu(2+)-mediated low-density lipoprotein oxidation. Can regulate neurite outgrowth through binding to components of the extracellular matrix such as heparin and collagen I and IV. Induces a AGER-dependent pathway that involves activation of p38 MAPK, resulting in internalization of amyloid-beta peptide and mitochondrial dysfunction in cultured cortical neurons. Provides Cu(2+) ions for GPC1 which are required for release of nitric oxide (NO) and subsequent degradation of the heparan sulfate chains on GPC1. Functionally, amyloid-beta peptides are lipophilic metal chelators with metal-reducing activity. Binds transient metals such as copper, zinc and iron. In terms of biological role, the gamma-CTF peptides as well as the caspase-cleaved peptides, including C31, are potent enhancers of neuronal apoptosis. This chain is Amyloid-beta precursor protein, found in Macaca fascicularis (Crab-eating macaque).